Reading from the N-terminus, the 346-residue chain is S-adenosylmethionine:tRNA ribosyltransferase-isomerase (346 aa).

The protein belongs to the QueA family. In terms of assembly, monomer.

The protein localises to the cytoplasm. It catalyses the reaction 7-aminomethyl-7-carbaguanosine(34) in tRNA + S-adenosyl-L-methionine = epoxyqueuosine(34) in tRNA + adenine + L-methionine + 2 H(+). Its pathway is tRNA modification; tRNA-queuosine biosynthesis. Its function is as follows. Transfers and isomerizes the ribose moiety from AdoMet to the 7-aminomethyl group of 7-deazaguanine (preQ1-tRNA) to give epoxyqueuosine (oQ-tRNA). The protein is S-adenosylmethionine:tRNA ribosyltransferase-isomerase of Nitrosomonas eutropha (strain DSM 101675 / C91 / Nm57).